Reading from the N-terminus, the 161-residue chain is Protein-lysine N-methyltransferase (161 aa).

A DxGxGxG SAM-binding motif motif is present at residues 34–40 (DLGCGDG).

It belongs to the class I-like SAM-binding methyltransferase superfamily. Monomer.

The enzyme catalyses L-lysyl-[protein] + S-adenosyl-L-methionine = N(6)-methyl-L-lysyl-[protein] + S-adenosyl-L-homocysteine + H(+). Catalyzes the methylation of lysine residues in target proteins, using S-adenosyl-L-methionine (SAM) as the methyl donor. Exhibits broad substrate specificity, being able to methylate the crenarchaeal chromatin protein Cren7 primarily at 'Lys-11', 'Lys-16' and 'Lys-31', as well as a number of recombinant Sulfolobus proteins in vitro. Methylates lysine residues in a rather sequence-independent manner. The sequence is that of Protein-lysine N-methyltransferase from Saccharolobus islandicus (strain REY15A) (Sulfolobus islandicus).